The following is a 728-amino-acid chain: Elongation factor 2 (728 aa).

The region spanning 18 to 258 (KFIRNIGIVA…MVIRHLPSPI (241 aa)) is the tr-type G domain. Residues 27–34 (AHIDHGKT), 93–97 (DTPGH), and 147–150 (NKVD) contribute to the GTP site. A Diphthamide modification is found at His-594.

This sequence belongs to the TRAFAC class translation factor GTPase superfamily. Classic translation factor GTPase family. EF-G/EF-2 subfamily.

The protein localises to the cytoplasm. Its function is as follows. Catalyzes the GTP-dependent ribosomal translocation step during translation elongation. During this step, the ribosome changes from the pre-translocational (PRE) to the post-translocational (POST) state as the newly formed A-site-bound peptidyl-tRNA and P-site-bound deacylated tRNA move to the P and E sites, respectively. Catalyzes the coordinated movement of the two tRNA molecules, the mRNA and conformational changes in the ribosome. The chain is Elongation factor 2 (fusA) from Archaeoglobus fulgidus (strain ATCC 49558 / DSM 4304 / JCM 9628 / NBRC 100126 / VC-16).